The primary structure comprises 782 residues: Semaphorin-3G (782 aa).

An N-terminal signal peptide occupies residues 1 to 22; it reads MAPSAWAICWLLGGLLLHGGSS. Positions 32 to 519 constitute a Sema domain; that stretch reads RLRLSYRDLL…SRLGVAQLRL (488 aa). N-linked (GlcNAc...) asparagine glycosylation occurs at asparagine 44. A disulfide bridge connects residues cysteine 105 and cysteine 116. Residue asparagine 127 is glycosylated (N-linked (GlcNAc...) asparagine). Intrachain disulfides connect cysteine 134/cysteine 143, cysteine 270/cysteine 382, cysteine 294/cysteine 342, cysteine 522/cysteine 540, and cysteine 603/cysteine 655. In terms of domain architecture, Ig-like C2-type spans 569–671; the sequence is PALQCLGQSQ…FSQTVVRLAL (103 aa).

This sequence belongs to the semaphorin family.

It is found in the secreted. Its function is as follows. Has chemorepulsive activities for sympathetic axons. Ligand of NRP2. This chain is Semaphorin-3G (SEMA3G), found in Homo sapiens (Human).